A 164-amino-acid polypeptide reads, in one-letter code: SsrA-binding protein (164 aa).

This sequence belongs to the SmpB family.

It localises to the cytoplasm. In terms of biological role, required for rescue of stalled ribosomes mediated by trans-translation. Binds to transfer-messenger RNA (tmRNA), required for stable association of tmRNA with ribosomes. tmRNA and SmpB together mimic tRNA shape, replacing the anticodon stem-loop with SmpB. tmRNA is encoded by the ssrA gene; the 2 termini fold to resemble tRNA(Ala) and it encodes a 'tag peptide', a short internal open reading frame. During trans-translation Ala-aminoacylated tmRNA acts like a tRNA, entering the A-site of stalled ribosomes, displacing the stalled mRNA. The ribosome then switches to translate the ORF on the tmRNA; the nascent peptide is terminated with the 'tag peptide' encoded by the tmRNA and targeted for degradation. The ribosome is freed to recommence translation, which seems to be the essential function of trans-translation. In Corynebacterium efficiens (strain DSM 44549 / YS-314 / AJ 12310 / JCM 11189 / NBRC 100395), this protein is SsrA-binding protein.